The sequence spans 140 residues: Large ribosomal subunit protein uL11 (140 aa).

It belongs to the universal ribosomal protein uL11 family. Part of the ribosomal stalk of the 50S ribosomal subunit. Interacts with L10 and the large rRNA to form the base of the stalk. L10 forms an elongated spine to which L12 dimers bind in a sequential fashion forming a multimeric L10(L12)X complex. One or more lysine residues are methylated.

Its function is as follows. Forms part of the ribosomal stalk which helps the ribosome interact with GTP-bound translation factors. The sequence is that of Large ribosomal subunit protein uL11 from Gemmatimonas aurantiaca (strain DSM 14586 / JCM 11422 / NBRC 100505 / T-27).